Consider the following 1168-residue polypeptide: DNA-directed RNA polymerase subunit beta (1168 aa).

It belongs to the RNA polymerase beta chain family. As to quaternary structure, the RNAP catalytic core consists of 2 alpha, 1 beta, 1 beta' and 1 omega subunit. When a sigma factor is associated with the core the holoenzyme is formed, which can initiate transcription.

The catalysed reaction is RNA(n) + a ribonucleoside 5'-triphosphate = RNA(n+1) + diphosphate. DNA-dependent RNA polymerase catalyzes the transcription of DNA into RNA using the four ribonucleoside triphosphates as substrates. In Rhodococcus opacus (strain B4), this protein is DNA-directed RNA polymerase subunit beta.